A 342-amino-acid chain; its full sequence is Elongation factor Ts (342 aa).

Positions 79–82 are involved in Mg(2+) ion dislocation from EF-Tu; sequence TDFV.

This sequence belongs to the EF-Ts family.

The protein localises to the cytoplasm. In terms of biological role, associates with the EF-Tu.GDP complex and induces the exchange of GDP to GTP. It remains bound to the aminoacyl-tRNA.EF-Tu.GTP complex up to the GTP hydrolysis stage on the ribosome. The sequence is that of Elongation factor Ts (tsf) from Lactococcus lactis subsp. lactis (strain IL1403) (Streptococcus lactis).